We begin with the raw amino-acid sequence, 612 residues long: UPF0329 protein ECU05_1680/ECU11_0050 (612 aa).

Residues 304-330 (RQRREMEKKEEEKKKEEEKKKEEEKRK) show a composition bias toward basic and acidic residues. Residues 304–424 (RQRREMEKKE…RKRYKIHRRV (121 aa)) are disordered. The segment covering 331 to 349 (EEKKKKKEEKKEEKKKKKE) has biased composition (basic residues). Basic and acidic residues predominate over residues 350 to 388 (EKKEEKKEEKKEEKKEEKKEEKKEEKKEEKSGKSLREGE).

The protein belongs to the UPF0329 family.

This chain is UPF0329 protein ECU05_1680/ECU11_0050, found in Encephalitozoon cuniculi (strain GB-M1) (Microsporidian parasite).